The primary structure comprises 250 residues: MGVAIDKCETRPANIEAILSGLDRYNPETTTVFQDYVVQQCEDRTFDCYANLALLKLYQFNPHLLQPETVTNILVKALTVFPSPAFSLCLALLPAYTQPFPSSEAEATAAQMSDFVESVQKLARLSSLLESAQYAQFWSTLNSDDLYADLVADVAGFEELVRIRIAVEVGKAFREVNAEVLEQWLDVRNSEALEKFVTEVCSWEVDKSGSATVVKVPTNKENEARSEVKSERVGVDMFGRVIRRGFEQAA.

Residues 46–229 (FDCYANLALL…KENEARSEVK (184 aa)) enclose the PCI domain.

Belongs to the eIF-3 subunit K family. In terms of assembly, component of the eukaryotic translation initiation factor 3 (eIF-3) complex.

Its subcellular location is the cytoplasm. Functionally, component of the eukaryotic translation initiation factor 3 (eIF-3) complex, which is involved in protein synthesis of a specialized repertoire of mRNAs and, together with other initiation factors, stimulates binding of mRNA and methionyl-tRNAi to the 40S ribosome. The eIF-3 complex specifically targets and initiates translation of a subset of mRNAs involved in cell proliferation. In Emericella nidulans (strain FGSC A4 / ATCC 38163 / CBS 112.46 / NRRL 194 / M139) (Aspergillus nidulans), this protein is Eukaryotic translation initiation factor 3 subunit K.